Here is a 107-residue protein sequence, read N- to C-terminus: Thiosulfate sulfurtransferase GlpE (107 aa).

The Rhodanese domain occupies 19-107; the sequence is QDLNAVLVDI…WHKAGLPVEK (89 aa). Catalysis depends on Cys67, which acts as the Cysteine persulfide intermediate.

Belongs to the GlpE family.

The protein localises to the cytoplasm. The enzyme catalyses thiosulfate + hydrogen cyanide = thiocyanate + sulfite + 2 H(+). The catalysed reaction is thiosulfate + [thioredoxin]-dithiol = [thioredoxin]-disulfide + hydrogen sulfide + sulfite + 2 H(+). Transferase that catalyzes the transfer of sulfur from thiosulfate to thiophilic acceptors such as cyanide or dithiols. May function in a CysM-independent thiosulfate assimilation pathway by catalyzing the conversion of thiosulfate to sulfite, which can then be used for L-cysteine biosynthesis. This chain is Thiosulfate sulfurtransferase GlpE, found in Aliivibrio fischeri (strain MJ11) (Vibrio fischeri).